The sequence spans 237 residues: Leucyl/phenylalanyl-tRNA--protein transferase (237 aa).

The protein belongs to the L/F-transferase family.

It is found in the cytoplasm. It carries out the reaction N-terminal L-lysyl-[protein] + L-leucyl-tRNA(Leu) = N-terminal L-leucyl-L-lysyl-[protein] + tRNA(Leu) + H(+). The enzyme catalyses N-terminal L-arginyl-[protein] + L-leucyl-tRNA(Leu) = N-terminal L-leucyl-L-arginyl-[protein] + tRNA(Leu) + H(+). The catalysed reaction is L-phenylalanyl-tRNA(Phe) + an N-terminal L-alpha-aminoacyl-[protein] = an N-terminal L-phenylalanyl-L-alpha-aminoacyl-[protein] + tRNA(Phe). Its function is as follows. Functions in the N-end rule pathway of protein degradation where it conjugates Leu, Phe and, less efficiently, Met from aminoacyl-tRNAs to the N-termini of proteins containing an N-terminal arginine or lysine. The polypeptide is Leucyl/phenylalanyl-tRNA--protein transferase (Photobacterium profundum (strain SS9)).